Consider the following 284-residue polypeptide: Bifunctional protein FolD (284 aa).

NADP(+) is bound by residues 165 to 167, S190, and I231; that span reads GRS.

The protein belongs to the tetrahydrofolate dehydrogenase/cyclohydrolase family. As to quaternary structure, homodimer.

It carries out the reaction (6R)-5,10-methylene-5,6,7,8-tetrahydrofolate + NADP(+) = (6R)-5,10-methenyltetrahydrofolate + NADPH. The catalysed reaction is (6R)-5,10-methenyltetrahydrofolate + H2O = (6R)-10-formyltetrahydrofolate + H(+). The protein operates within one-carbon metabolism; tetrahydrofolate interconversion. In terms of biological role, catalyzes the oxidation of 5,10-methylenetetrahydrofolate to 5,10-methenyltetrahydrofolate and then the hydrolysis of 5,10-methenyltetrahydrofolate to 10-formyltetrahydrofolate. The sequence is that of Bifunctional protein FolD from Streptococcus thermophilus (strain ATCC BAA-491 / LMD-9).